Here is an 809-residue protein sequence, read N- to C-terminus: Bifunctional enzyme MurC/Ddl (809 aa).

The UDP-N-acetylmuramate--alanine ligase stretch occupies residues 1-450; sequence MKGTPQYHFI…GEALKDFNPK (450 aa). Residues 111–117 and 606–661 each bind ATP; these read GSHGKTG and IETF…SREI. Residues 451 to 809 form a D-alanine--D-alanine ligase region; sequence KLSIGLVCGG…FTKEQDLVKR (359 aa). In terms of domain architecture, ATP-grasp spans 573–784; the sequence is KRIASAVGVP…QEQIVDHFII (212 aa). Residues D738, E751, and N753 each contribute to the Mg(2+) site.

It in the N-terminal section; belongs to the MurCDEF family. In the C-terminal section; belongs to the D-alanine--D-alanine ligase family. Requires Mg(2+) as cofactor. It depends on Mn(2+) as a cofactor.

The protein localises to the cytoplasm. The enzyme catalyses UDP-N-acetyl-alpha-D-muramate + L-alanine + ATP = UDP-N-acetyl-alpha-D-muramoyl-L-alanine + ADP + phosphate + H(+). It carries out the reaction 2 D-alanine + ATP = D-alanyl-D-alanine + ADP + phosphate + H(+). It participates in cell wall biogenesis; peptidoglycan biosynthesis. Cell wall formation. The polypeptide is Bifunctional enzyme MurC/Ddl (murC/ddl) (Chlamydia pneumoniae (Chlamydophila pneumoniae)).